The following is a 291-amino-acid chain: Kidney mitochondrial carrier protein 1 (291 aa).

Serine 2 bears the N-acetylserine mark. Solcar repeat units follow at residues lysine 7 to leucine 96, glutamate 104 to histidine 189, and aspartate 198 to leucine 289. Helical transmembrane passes span phenylalanine 9–isoleucine 26, glycine 71–threonine 89, threonine 105–alanine 124, glycine 164–tyrosine 183, phenylalanine 204–valine 224, and glycine 264–tyrosine 283.

It belongs to the mitochondrial carrier (TC 2.A.29) family. In terms of assembly, interacts with VDAC1.

It is found in the mitochondrion inner membrane. The catalysed reaction is sulfite(in) + sulfate(out) = sulfite(out) + sulfate(in). It catalyses the reaction thiosulfate(in) + sulfate(out) = thiosulfate(out) + sulfate(in). The enzyme catalyses sulfate(out) + phosphate(in) = sulfate(in) + phosphate(out). It carries out the reaction oxalate(in) + sulfate(out) = oxalate(out) + sulfate(in). The catalysed reaction is malonate(in) + sulfate(out) = malonate(out) + sulfate(in). It catalyses the reaction maleate(in) + sulfate(out) = maleate(out) + sulfate(in). The enzyme catalyses (S)-malate(in) + sulfate(out) = (S)-malate(out) + sulfate(in). It carries out the reaction (3S)-citramalate(in) + sulfate(out) = (3S)-citramalate(out) + sulfate(in). The catalysed reaction is (3R)-citramalate(in) + sulfate(out) = (3R)-citramalate(out) + sulfate(in). It catalyses the reaction sulfate(out) + succinate(in) = sulfate(in) + succinate(out). The enzyme catalyses (S,S)-tartrate(in) + sulfate(out) = (S,S)-tartrate(out) + sulfate(in). It carries out the reaction (2R,3R)-tartrate(in) + sulfate(out) = (2R,3R)-tartrate(out) + sulfate(in). The catalysed reaction is D-aspartate(in) + sulfate(out) = D-aspartate(out) + sulfate(in). It catalyses the reaction L-aspartate(in) + sulfate(out) = L-aspartate(out) + sulfate(in). The enzyme catalyses sulfate(in) = sulfate(out). It carries out the reaction phosphate(in) = phosphate(out). The catalysed reaction is (S)-malate(out) = (S)-malate(in). Its activity is regulated as follows. Increased activity at pH 6.0. sulfate/sulfate exchange activity is inhibited strongly by pyridoxal 5'-phosphate, bathophenanthroline and the organic mercurials mersalyl, p-chloromercuribenzoate and HgCl2. Antiporter that transports inorganic anions (sulfate, sulfite, thiosulfate and phosphate) and, to a lesser extent, a variety of dicarboxylates (e.g. malonate, malate and citramalate) and, even more so, aspartate. The sulfate/sulfate exchange is much higher than the phosphate/phosphate and malate/malate exchanges. The transport affinities is higher for sulfate and thiosulfate than for any other substrate. May catalyze the export of sulfite and thiosulfate (the hydrogen sulfide degradation products) from the mitochondria, thereby modulating the level of the hydrogen sulfide. Also may mediate a very low unidirectional transport of sulfate, phosphate and (S)-malate. The sequence is that of Kidney mitochondrial carrier protein 1 from Homo sapiens (Human).